The following is a 240-amino-acid chain: ATP-dependent dethiobiotin synthetase BioD (240 aa).

15 to 20 contributes to the ATP binding site; it reads EIGKTF. Threonine 19 provides a ligand contact to Mg(2+). Lysine 40 is a catalytic residue. ATP-binding positions include aspartate 57, 118 to 121, and 178 to 179; these read EGVG and NR. The Mg(2+) site is built by aspartate 57 and glutamate 118.

This sequence belongs to the dethiobiotin synthetase family. Homodimer. The cofactor is Mg(2+).

Its subcellular location is the cytoplasm. It carries out the reaction (7R,8S)-7,8-diammoniononanoate + CO2 + ATP = (4R,5S)-dethiobiotin + ADP + phosphate + 3 H(+). The protein operates within cofactor biosynthesis; biotin biosynthesis; biotin from 7,8-diaminononanoate: step 1/2. Functionally, catalyzes a mechanistically unusual reaction, the ATP-dependent insertion of CO2 between the N7 and N8 nitrogen atoms of 7,8-diaminopelargonic acid (DAPA, also called 7,8-diammoniononanoate) to form a ureido ring. The chain is ATP-dependent dethiobiotin synthetase BioD from Burkholderia mallei (strain NCTC 10247).